The chain runs to 341 residues: B3 domain-containing transcription factor VRN1 (341 aa).

Positions 5 to 98 form a DNA-binding region, TF-B3 1; the sequence is FFHKLIFSST…AFSVYIFNLS (94 aa). The interval 166–223 is disordered; it reads GPVKAEEPTPTPKIPKKRGRKKKNADPEEINSSAPRDDDPENRSKFYESASARKRTVT. Residues 179–188 are compositionally biased toward basic residues; sequence IPKKRGRKKK. The segment covering 200–211 has biased composition (basic and acidic residues); sequence PRDDDPENRSKF. The TF-B3 2 DNA-binding region spans 244–338; it reads FRVVLRPSYL…VLKVTAFRVN (95 aa).

As to expression, expressed in roots and at lower levels in aerial parts.

Its subcellular location is the nucleus. Functionally, essential protein. Involved in the regulation of vernalization. Acts as a transcriptional repressor of FLC, a major target of the vernalization pathway. Binds DNA in vitro in a non-sequence-specific manner. The protein is B3 domain-containing transcription factor VRN1 of Arabidopsis thaliana (Mouse-ear cress).